The following is a 397-amino-acid chain: Multidrug resistance protein MdtH (397 aa).

Transmembrane regions (helical) follow at residues 11–31 (WFLA…MPMI), 32–52 (SLRF…ALGL), 71–91 (FGAR…FASL), 94–114 (AQSG…GCLF), 137–157 (LLMM…SWLL), 163–183 (YVCL…LLIL), 211–231 (LVLI…IFPI), 242–262 (AVGW…YPLA), 291–311 (FANT…GIVI), 340–360 (LALG…YAML), and 366–386 (LPWL…VNCF).

The protein belongs to the major facilitator superfamily. DHA1 family. MdtH (TC 2.A.1.2.21) subfamily.

Its subcellular location is the cell inner membrane. The sequence is that of Multidrug resistance protein MdtH from Aeromonas hydrophila subsp. hydrophila (strain ATCC 7966 / DSM 30187 / BCRC 13018 / CCUG 14551 / JCM 1027 / KCTC 2358 / NCIMB 9240 / NCTC 8049).